The primary structure comprises 1268 residues: MEAVKTFNSELYSLNDYKPPISKAKMTQITKAAIKAIKFYKHVVQSVEKFIQKCKPEYKVPGLYVIDSIVRQSRHQFGQEKDVFAPRFSNNIISTFQNLYRCPGDDKSKIVRVLNLWQKNNVFKSEIIQPLLDMAAGIPPPVVTPVLASTTAAMSNTPGTPVTPVTPANVVQGLPDPWVSQIANTDTLAAVAQILQSPQGQQLQQLIQTLQIQQQKPQPSILQALDAGLVVQLQALTAQLTAAAAAANTLTPLDQGVSFNKKLMDRFDFGEDSEHSEESKKEMPTPQLSHVSESVNNSIFHQIAEQLQQQNLEQLRQQLLEQQQPQKVTPQDSQEGTFGSEHSASPSQGSSQQHFLEPEANLDDSIDIQQQDMDIDEGQDVVEEEIFEPEAKKVAVRSRSRTHSRSRSRSPRKRRSRSRSGSRKRKHRKRSRSHSREKKRKASRSYSSERRAREREKERQKKGLPPVRSKTLSVCSTTLWVGQVDKKATQQDLTNLFEEFGQIESINMIPPRGCAYVCMVHRQDSFRALQKLSSGSYKIGSKVIKIAWALNKGVKTEYKQFWDVDLGVTYIPWEKVKVDDLDGFAEGGMIDQETVNAEWETVKASEPVKEPVQTAQSPAPVEKESVVTTQAEVFPPPVAMLQIPVAPAVPAVSLVPPAFPVSMPVPPPGFNPIPPPPFLRASFNPSQPPPGFMPPPVPPPVVPPPAIPPVVPTSLVQPPLSMTPEAVKDVGFGSLVLPSGSVAGSLAPSTLPAGNVFNPPSKAEPEEKVPHLIEHQIPSGENTRPVIPSDIPSSAAMLAQPPGASSTSGILCVQRPNVSSNSEILGVRPANVSNSAAIMGAQPPNILNNSGILAIQPPNVSSGSGLLGVLPPNLPNNSGLVGLQPPNVTSPAGLLGTQPPIGPQNLPPLAIPAQRMPALPMLDIRPGLIAQAPGPRFPLLQPGIPPQRGIPPPSVLDAALHPPPRGPFPPGDLFSQPERPFLAPGRPSIDNVPNPDKRIPLGNDNIQQEGDRDYRFPPIETREGITRPPQVDVRDVVGRRLDPREGPGRPPLDARDHFGRPPVDMRENLVRPSLDHLGRRDHFGFPPEKPWGPRDFDEREHRVLPVFGGPKGLHEERGRFRAGNYRFDPRSGPWNRGFGQEVHRDFDDRRRPWERQRDRDDRDFDFCREINGNRLGRDRIQNTWVPPPHARVFDYFEGATSQRKGDNVPQVNGENTERHAQPPPLPVQKDPELYEKLASSGDVDKEESGTVAGVESEAVVESTETEGT.

Positions 1–139 constitute a CID domain; it reads MEAVKTFNSE…PLLDMAAGIP (139 aa). T6 carries the post-translational modification Phosphothreonine. A Glycyl lysine isopeptide (Lys-Gly) (interchain with G-Cter in SUMO1) cross-link involves residue K18. A compositionally biased stretch (basic and acidic residues) spans 270–283; the sequence is GEDSEHSEESKKEM. Disordered stretches follow at residues 270 to 290, 322 to 355, and 385 to 469; these read GEDS…QLSH, QQQP…QQHF, and EIFE…PVRS. S273 is modified (phosphoserine). Over residues 327-354 the composition is skewed to polar residues; that stretch reads KVTPQDSQEGTFGSEHSASPSQGSSQQH. Residues 394 to 443 show a composition bias toward basic residues; sequence VAVRSRSRTHSRSRSRSPRKRRSRSRSGSRKRKHRKRSRSHSREKKRKAS. The segment covering 447–461 has biased composition (basic and acidic residues); it reads SSERRAREREKERQK. In terms of domain architecture, RRM spans 477–551; sequence TTLWVGQVDK…KVIKIAWALN (75 aa). S617 is subject to Phosphoserine. Positions 776–807 are disordered; that stretch reads QIPSGENTRPVIPSDIPSSAAMLAQPPGASST. Asymmetric dimethylarginine is present on residues R915, R925, and R936. Disordered stretches follow at residues 984–1012 and 1040–1065; these read PGRP…EGDR and RLDP…PVDM. The residue at position 1071 (R1071) is an Asymmetric dimethylarginine. Residues 1199–1268 are disordered; sequence ATSQRKGDNV…VVESTETEGT (70 aa). Over residues 1249 to 1262 the composition is skewed to low complexity; it reads GTVAGVESEAVVES.

Interacts with POLR2A; via C-terminal heptapeptide repeat domain (CTD) phosphorylated at 'Ser-2' and 'Ser-5'. Identified in a complex with CDC5L and other spliceosomal proteins.

The protein resides in the nucleus. It localises to the nucleus matrix. Anti-terminator protein required to prevent early mRNA termination during transcription. Together with SCAF4, acts by suppressing the use of early, alternative poly(A) sites, thereby preventing the accumulation of non-functional truncated proteins. Mechanistically, associates with the phosphorylated C-terminal heptapeptide repeat domain (CTD) of the largest RNA polymerase II subunit (POLR2A), and subsequently binds nascent RNA upstream of early polyadenylation sites to prevent premature mRNA transcript cleavage and polyadenylation. Independently of SCAF4, also acts as a positive regulator of transcript elongation. This chain is SR-related and CTD-associated factor 8, found in Mus musculus (Mouse).